The primary structure comprises 222 residues: Methylthioribulose-1-phosphate dehydratase (222 aa).

Zn(2+) contacts are provided by His94 and His96.

This sequence belongs to the aldolase class II family. MtnB subfamily. It depends on Zn(2+) as a cofactor.

The catalysed reaction is 5-(methylsulfanyl)-D-ribulose 1-phosphate = 5-methylsulfanyl-2,3-dioxopentyl phosphate + H2O. Its pathway is amino-acid biosynthesis; L-methionine biosynthesis via salvage pathway; L-methionine from S-methyl-5-thio-alpha-D-ribose 1-phosphate: step 2/6. In terms of biological role, catalyzes the dehydration of methylthioribulose-1-phosphate (MTRu-1-P) into 2,3-diketo-5-methylthiopentyl-1-phosphate (DK-MTP-1-P). In Yersinia pseudotuberculosis serotype IB (strain PB1/+), this protein is Methylthioribulose-1-phosphate dehydratase.